Reading from the N-terminus, the 431-residue chain is Na(+)-translocating NADH-quinone reductase subunit F (431 aa).

A helical membrane pass occupies residues 10 to 30 (IFIASTAFCALGLLLVAIILL). One can recognise a 2Fe-2S ferredoxin-type domain in the interval 41-133 (CKLRINNDDS…DMNLEIEERY (93 aa)). [2Fe-2S] cluster-binding residues include Cys76, Cys82, Cys85, and Cys117. The region spanning 136 to 286 (ASSWEGTVVS…SGPYGESFMK (151 aa)) is the FAD-binding FR-type domain. The catalytic stretch occupies residues 289-413 (NRPVIFLIGG…ALHNSSILTL (125 aa)).

The protein belongs to the NqrF family. In terms of assembly, composed of six subunits; NqrA, NqrB, NqrC, NqrD, NqrE and NqrF. [2Fe-2S] cluster is required as a cofactor. FAD serves as cofactor.

The protein resides in the cell inner membrane. It carries out the reaction a ubiquinone + n Na(+)(in) + NADH + H(+) = a ubiquinol + n Na(+)(out) + NAD(+). Functionally, NQR complex catalyzes the reduction of ubiquinone-1 to ubiquinol by two successive reactions, coupled with the transport of Na(+) ions from the cytoplasm to the periplasm. The first step is catalyzed by NqrF, which accepts electrons from NADH and reduces ubiquinone-1 to ubisemiquinone by a one-electron transfer pathway. The polypeptide is Na(+)-translocating NADH-quinone reductase subunit F (Chlamydia muridarum (strain MoPn / Nigg)).